The following is a 66-amino-acid chain: Metallothionein-like protein type 3 (66 aa).

The protein belongs to the metallothionein superfamily. Type 15 family.

Its function is as follows. Metallothioneins have a high content of cysteine residues that bind various heavy metals. The polypeptide is Metallothionein-like protein type 3 (MT2) (Malus domestica (Apple)).